A 256-amino-acid polypeptide reads, in one-letter code: (R)-S-adenosyl-L-methionine hydrolase (256 aa).

Positions 7, 41, 68, and 183 each coordinate adenosine. Residues N183, Y212, S226, E231, V234, and M236 each contribute to the (R)-S-adenosyl-L-methionine site. Adenosine is bound at residue V234.

The protein belongs to the SAM hydrolase / SAM-dependent halogenase family. Homotrimer.

It carries out the reaction (R)-S-adenosyl-L-methionine + H2O = adenosine + L-methionine + H(+). Catalyzes the hydrolysis of S-adenosyl-L-methionine (SAM) into adenosine and L-methionine. Is likely stereoselective, specifically hydrolyzing (R)-S-adenosyl-L-methionine ((R)-SAM), the inactive form of the ubiquitous cofactor SAM, and not the active form of SAM, (S)-S-adenosyl-L-methionine. Probaly plays a role in preventing accumulation of (R)-S-adenosyl-L-methionine in cells; maintenance of (S)-S-denosyl-L-methionine homochirality is important for cellular health given that the (R)-form is largely inactive as a methyl donor and can function as an inhibitor of methyltransferases. Is unable to mediate a fluorination or chlorination reaction with SAM. The polypeptide is (R)-S-adenosyl-L-methionine hydrolase (Pyrococcus horikoshii (strain ATCC 700860 / DSM 12428 / JCM 9974 / NBRC 100139 / OT-3)).